The primary structure comprises 747 residues: Pyrin (747 aa).

The Pyrin domain occupies Met-1–Pro-92. Positions Ala-89–Arg-181 are disordered. Positions Pro-122–Asp-135 are enriched in acidic residues. Zn(2+) contacts are provided by Cys-442, His-445, Cys-465, and His-471. Residues Cys-442 to Ile-479 form a B box-type zinc finger. Residues Ile-479 to Lys-508 adopt a coiled-coil conformation. Residues Lys-487–Met-645 are required for homotrimerization and induction of pyroptosomes. Residues Glu-698–Gln-720 are disordered.

Homotrimer. Interacts (via the B box-type zinc finger) with PSTPIP1. Interacts (via the B30.2/SPRY domain) with several components of the inflammasome complex, including CASP1 p20 and p10 subunits, CASP5, PYCARD, NLRP1, NLRP2 and NLRP3, as well as with unprocessed IL1B; this interaction may lead to autophagic degradation of these proteins. Component of the AIM2 PANoptosome complex, a multiprotein complex that drives inflammatory cell death (PANoptosis). Interacts with NFKBIA and RELA. Interacts weakly with VASP and ACTR3. Interacts with active ULK1 (phosphorylated on 'Ser-317') and BECN1 simultaneously. Also interacts with ATG16L1 (via WD repeats), and with ATG8 family members, including GABARAP, GABARAPL1 and, to a lesser extent, GABARAPL2, MAP1LC3A/LC3A and MAP1LC3C/LC3C. Interacts with TRIM21. Interacts with YWHAB, YWHAE, YWHAG, YWHAH, YWHAQ and YWHAZ; the interaction is required for the down-regulation of pyrin pro-inflammatory activity. Post-translationally, degraded along with the delivery of its substrates to autolysosomal compartments (at protein level). As to expression, expressed in spleen and, to a lesser degree in the lung. Not expressed in thymus, testis, ovary, heart, brain, liver, kidney and muscle.

It localises to the cytoplasm. Its subcellular location is the cytoskeleton. The protein localises to the cell projection. It is found in the ruffle. The protein resides in the lamellipodium. It localises to the cytoplasmic vesicle. Its subcellular location is the autophagosome. The protein localises to the nucleus. Functionally, involved in the regulation of innate immunity and the inflammatory response in response to IFNG/IFN-gamma. Organizes autophagic machinery by serving as a platform for the assembly of ULK1, Beclin 1/BECN1, ATG16L1, and ATG8 family members and recognizes specific autophagy targets, thus coordinating target recognition with assembly of the autophagic apparatus and initiation of autophagy. Acts as an autophagy receptor for the degradation of several inflammasome components, including CASP1, NLRP1 and NLRP3, hence preventing excessive IL1B- and IL18-mediated inflammation. However, it can also have a positive effect in the inflammatory pathway, acting as an innate immune sensor that triggers PYCARD/ASC specks formation, caspase-1 activation, and IL1B and IL18 production. Together with AIM2, also acts as a mediator of pyroptosis, necroptosis and apoptosis (PANoptosis), an integral part of host defense against pathogens, in response to bacterial infection. It is required for PSTPIP1-induced PYCARD/ASC oligomerization and inflammasome formation. Recruits PSTPIP1 to inflammasomes, and is required for PSTPIP1 oligomerization. This chain is Pyrin, found in Rattus norvegicus (Rat).